A 333-amino-acid chain; its full sequence is Nuclear egress protein 1 (333 aa).

The interval 45 to 64 (SRRYKSVSRSGPSMRVRSRT) is disordered. The CCCH-type zinc finger occupies 128–251 (CLSLSGMGYH…YVIFPGKSVH (124 aa)).

This sequence belongs to the herpesviridae NEC1 protein family. In terms of assembly, forms a heterohexameric complex with NEC2. Interacts with capsid vertex specific component 2/CVC2; this interaction directs the capsid to the host inner nuclear membrane to initiate budding. Phosphorylated at serine residues in the N-terminus. This phosphorylation regulates the localization within the inner nuclear membrane.

The protein resides in the host nucleus inner membrane. Its function is as follows. Plays an essential role in virion nuclear egress, the first step of virion release from infected cell. Within the host nucleus, NEC1 interacts with the newly formed capsid through the vertexes and directs it to the inner nuclear membrane by associating with NEC2. Induces the budding of the capsid at the inner nuclear membrane as well as its envelopment into the perinuclear space. There, the NEC1/NEC2 complex promotes the fusion of the enveloped capsid with the outer nuclear membrane and the subsequent release of the viral capsid into the cytoplasm where it will reach the secondary budding sites in the host Golgi or trans-Golgi network. In Varicella-zoster virus (strain Dumas) (HHV-3), this protein is Nuclear egress protein 1.